Here is a 173-residue protein sequence, read N- to C-terminus: Large ribosomal subunit protein uL10 (173 aa).

Belongs to the universal ribosomal protein uL10 family. As to quaternary structure, part of the ribosomal stalk of the 50S ribosomal subunit. The N-terminus interacts with L11 and the large rRNA to form the base of the stalk. The C-terminus forms an elongated spine to which L12 dimers bind in a sequential fashion forming a multimeric L10(L12)X complex.

Forms part of the ribosomal stalk, playing a central role in the interaction of the ribosome with GTP-bound translation factors. This is Large ribosomal subunit protein uL10 from Oleidesulfovibrio alaskensis (strain ATCC BAA-1058 / DSM 17464 / G20) (Desulfovibrio alaskensis).